The following is a 149-amino-acid chain: Proline-rich acidic protein 1 (149 aa).

Residues 1-20 (MKRFLLATCLVAALLWEAGA) form the signal peptide. Disordered regions lie at residues 51-79 (EPLE…KRPD) and 97-122 (LQGP…EVPQ). The span at 66-79 (PKQKPAAAEEKRPD) shows a compositional bias: basic and acidic residues.

In terms of assembly, interacts with MTTP. Interacts with MAD1L1. Predominantly expressed in the intestinal epithelial cells than in the liver (at protein level). Abundantly expressed in the uterus during late pregnancy by uterus epithelial cells. After birth expression rapidly decreases and is no longer found in the uterus by the third day. Also highly expressed in the small intestine where it shows a proximal-distal graded expression.

The protein localises to the secreted. Its subcellular location is the endoplasmic reticulum. Functionally, lipid-binding protein which promotes lipid absorption by facilitating MTTP-mediated lipid transfer (mainly triglycerides and phospholipids) and MTTP-mediated apoB lipoprotein assembly and secretion. Protects the gastrointestinal epithelium from irradiation-induced apoptosis. May play an important role in maintaining normal growth homeostasis in epithelial cells. Involved in p53/TP53-dependent cell survival after DNA damage. The chain is Proline-rich acidic protein 1 (Prap1) from Mus musculus (Mouse).